The primary structure comprises 501 residues: ATP synthase subunit alpha (501 aa).

169 to 176 is a binding site for ATP; it reads GDRQTGKT.

The protein belongs to the ATPase alpha/beta chains family. In terms of assembly, F-type ATPases have 2 components, CF(1) - the catalytic core - and CF(0) - the membrane proton channel. CF(1) has five subunits: alpha(3), beta(3), gamma(1), delta(1), epsilon(1). CF(0) has three main subunits: a(1), b(2) and c(9-12). The alpha and beta chains form an alternating ring which encloses part of the gamma chain. CF(1) is attached to CF(0) by a central stalk formed by the gamma and epsilon chains, while a peripheral stalk is formed by the delta and b chains.

The protein resides in the cell membrane. It catalyses the reaction ATP + H2O + 4 H(+)(in) = ADP + phosphate + 5 H(+)(out). Its function is as follows. Produces ATP from ADP in the presence of a proton gradient across the membrane. The alpha chain is a regulatory subunit. The sequence is that of ATP synthase subunit alpha from Streptococcus agalactiae serotype III (strain NEM316).